We begin with the raw amino-acid sequence, 447 residues long: GTPase Der (447 aa).

EngA-type G domains lie at 3–167 (PVIA…HLAD) and 180–353 (IRLA…ASAN). Residues 9 to 16 (GRPNVGKS), 56 to 60 (DTGGF), 119 to 122 (NKAE), 186 to 193 (GRPNVGKS), 233 to 237 (DTAGL), and 298 to 301 (NKWD) each bind GTP. The KH-like domain maps to 354-438 (RKMSTPVLTR…PMRIQMKSSH (85 aa)).

Belongs to the TRAFAC class TrmE-Era-EngA-EngB-Septin-like GTPase superfamily. EngA (Der) GTPase family. Associates with the 50S ribosomal subunit.

Functionally, GTPase that plays an essential role in the late steps of ribosome biogenesis. The sequence is that of GTPase Der from Polaromonas sp. (strain JS666 / ATCC BAA-500).